The chain runs to 381 residues: Homoserine O-succinyltransferase (381 aa).

The 309-residue stretch at Ile-53–Leu-361 folds into the AB hydrolase-1 domain. The active-site Nucleophile is the Ser-157. Arg-227 provides a ligand contact to substrate. Active-site residues include Asp-324 and His-357. Asp-358 is a substrate binding site.

This sequence belongs to the AB hydrolase superfamily. MetX family. Homodimer.

The protein resides in the cytoplasm. It carries out the reaction L-homoserine + succinyl-CoA = O-succinyl-L-homoserine + CoA. It functions in the pathway amino-acid biosynthesis; L-methionine biosynthesis via de novo pathway; O-succinyl-L-homoserine from L-homoserine: step 1/1. Transfers a succinyl group from succinyl-CoA to L-homoserine, forming succinyl-L-homoserine. This Saccharophagus degradans (strain 2-40 / ATCC 43961 / DSM 17024) protein is Homoserine O-succinyltransferase.